The following is a 436-amino-acid chain: MTKQPFYKSLYVQVLVAIAIGIALGHWYPETAVAMKPFGDGFVKLIKMAIAPIIFCTVVTGIAGMQSMKSVGKTGGMALLYFEVVSTVALIIGLVVVNVVQPGAGMHVDPNTLDTSKIAAYAAAGEKQSTVDFLMNVIPGTVVGAFANGDILQVLFFSVLFGYALHRLGSYGKPVFEFIERVSHVMFNIINVIMKVAPIGAFGAMAFTIGAYGVGSLVQLGQLMLCFYITCILFVLIVLGGIARAHGFSILRFIRYIREELLIVLGTSSSESALPRMIDKMEKLGCNKSVVGLVIPTGYSFNLDGTSIYLTMAAVFIAQATDTPMDITHQITLLLVLLIASKGAAGVTGSGFIVLAATLSAVGHLPVAGLALILGIDRFMSEARALTNLVGNGVATVVVSKWCKQLDEGTLQRELAGEGNASSPASDIPVGGREAV.

The next 9 membrane-spanning stretches (helical) occupy residues 14-34, 45-65, 77-97, 142-162, 198-218, 223-243, 290-310, 331-351, and 353-373; these read VLVA…TAVA, LIKM…IAGM, MALL…LVVV, VVGA…VLFG, PIGA…GSLV, LMLC…GGIA, VVGL…SIYL, ITLL…TGSG, and IVLA…LALI. Residues 414–436 are disordered; that stretch reads ELAGEGNASSPASDIPVGGREAV.

Belongs to the dicarboxylate/amino acid:cation symporter (DAACS) (TC 2.A.23) family.

Its subcellular location is the cell inner membrane. Functionally, responsible for the transport of dicarboxylates such as succinate, fumarate, and malate from the periplasm across the membrane. The polypeptide is C4-dicarboxylate transport protein 2 (Pseudomonas aeruginosa (strain UCBPP-PA14)).